Here is a 293-residue protein sequence, read N- to C-terminus: D-psicose 3-epimerase (293 aa).

Residues tyrosine 6 and alanine 107 each contribute to the substrate site. The Proton donor/acceptor role is filled by glutamate 150. Mn(2+) is bound at residue glutamate 150. Residues glutamate 156 and 183–186 each bind substrate; that span reads DTFH. Mn(2+) is bound by residues aspartate 183 and histidine 209. Arginine 215 lines the substrate pocket. Glutamate 244 (proton donor/acceptor) is an active-site residue. Residue glutamate 244 participates in Mn(2+) binding.

It belongs to the hyi family. As to quaternary structure, homotetramer. Requires Mn(2+) as cofactor. It depends on Co(2+) as a cofactor.

The catalysed reaction is D-allulose = keto-D-fructose. Functionally, involved in the biosynthesis of D-psicose. Catalyzes the reversible epimerization of D-fructose at the C3 position to yield D-psicose. The enzyme is highly specific for D-psicose and shows very low activity with D-tagatose. The polypeptide is D-psicose 3-epimerase (Ruminiclostridium cellulolyticum (strain ATCC 35319 / DSM 5812 / JCM 6584 / H10) (Clostridium cellulolyticum)).